The sequence spans 938 residues: Isoleucine--tRNA ligase (938 aa).

The 'HIGH' region motif lies at 58-68 (PYANGNIHLGH). Position 562 (E562) interacts with L-isoleucyl-5'-AMP. The short motif at 603-607 (KMSKS) is the 'KMSKS' region element. K606 contacts ATP. Positions 901, 904, 921, and 924 each coordinate Zn(2+).

It belongs to the class-I aminoacyl-tRNA synthetase family. IleS type 1 subfamily. In terms of assembly, monomer. It depends on Zn(2+) as a cofactor.

The protein resides in the cytoplasm. The enzyme catalyses tRNA(Ile) + L-isoleucine + ATP = L-isoleucyl-tRNA(Ile) + AMP + diphosphate. Catalyzes the attachment of isoleucine to tRNA(Ile). As IleRS can inadvertently accommodate and process structurally similar amino acids such as valine, to avoid such errors it has two additional distinct tRNA(Ile)-dependent editing activities. One activity is designated as 'pretransfer' editing and involves the hydrolysis of activated Val-AMP. The other activity is designated 'posttransfer' editing and involves deacylation of mischarged Val-tRNA(Ile). This chain is Isoleucine--tRNA ligase, found in Glaesserella parasuis serovar 5 (strain SH0165) (Haemophilus parasuis).